Reading from the N-terminus, the 311-residue chain is MEIGTSLKINMIIALFLTIVSEGIFSLVIINFLKFPVIFSIIFLLILWLIQWLISPYLVERNSVEVTRDDPSYGWVYELVENVARRAGIKTPRVFLVDEPYPNAFAYGNYVTGKRIGITIPLLQILTTEELESVIGHELGHIKHNDVEIGLAIGLIPSILGFISNILLTVGWATLIFAVDEFDILVGLTMLAIGGVLFVITFFLQLFVLWFNRLRESFADYFSYELFRERAWNLAKALAKIEIYMQNIRLDPFRGIIVTIPPTKVKESDPDLLIEDLLREKTNIFSDILSTHPHPAKRIKMIYKLTKPMIF.

Transmembrane regions (helical) follow at residues isoleucine 12–phenylalanine 32 and phenylalanine 35–serine 55. Position 137 (histidine 137) interacts with Zn(2+). Glutamate 138 is a catalytic residue. Residue histidine 141 participates in Zn(2+) binding. A run of 2 helical transmembrane segments spans residues isoleucine 159–valine 179 and isoleucine 184–leucine 204. Glutamate 216 serves as a coordination point for Zn(2+).

This sequence belongs to the peptidase M48B family. Zn(2+) serves as cofactor.

It is found in the cell membrane. The protein is Protease HtpX homolog 1 of Sulfurisphaera tokodaii (strain DSM 16993 / JCM 10545 / NBRC 100140 / 7) (Sulfolobus tokodaii).